A 175-amino-acid chain; its full sequence is Ribosome maturation factor RimM (175 aa).

The PRC barrel domain occupies 94-166 (SDSWYEHELI…FIRLVPPGGL (73 aa)).

This sequence belongs to the RimM family. Binds ribosomal protein uS19.

It is found in the cytoplasm. Its function is as follows. An accessory protein needed during the final step in the assembly of 30S ribosomal subunit, possibly for assembly of the head region. Essential for efficient processing of 16S rRNA. May be needed both before and after RbfA during the maturation of 16S rRNA. It has affinity for free ribosomal 30S subunits but not for 70S ribosomes. The sequence is that of Ribosome maturation factor RimM from Renibacterium salmoninarum (strain ATCC 33209 / DSM 20767 / JCM 11484 / NBRC 15589 / NCIMB 2235).